The chain runs to 274 residues: ATP synthase subunit delta (274 aa).

This sequence belongs to the ATPase delta chain family. As to quaternary structure, F-type ATPases have 2 components, F(1) - the catalytic core - and F(0) - the membrane proton channel. F(1) has five subunits: alpha(3), beta(3), gamma(1), delta(1), epsilon(1). F(0) has three main subunits: a(1), b(2) and c(10-14). The alpha and beta chains form an alternating ring which encloses part of the gamma chain. F(1) is attached to F(0) by a central stalk formed by the gamma and epsilon chains, while a peripheral stalk is formed by the delta and b chains.

It is found in the cell membrane. In terms of biological role, f(1)F(0) ATP synthase produces ATP from ADP in the presence of a proton or sodium gradient. F-type ATPases consist of two structural domains, F(1) containing the extramembraneous catalytic core and F(0) containing the membrane proton channel, linked together by a central stalk and a peripheral stalk. During catalysis, ATP synthesis in the catalytic domain of F(1) is coupled via a rotary mechanism of the central stalk subunits to proton translocation. Its function is as follows. This protein is part of the stalk that links CF(0) to CF(1). It either transmits conformational changes from CF(0) to CF(1) or is implicated in proton conduction. This Corynebacterium efficiens (strain DSM 44549 / YS-314 / AJ 12310 / JCM 11189 / NBRC 100395) protein is ATP synthase subunit delta.